The following is a 489-amino-acid chain: Cytochrome P450 monooxygenase tazI (489 aa).

Residue Cys433 coordinates heme.

It belongs to the cytochrome P450 family. Heme is required as a cofactor.

It participates in secondary metabolite biosynthesis. Cytochrome P450 monooxygenase; part of the gene cluster that mediates the biosynthesis of azaterrilone A and other azaphilones, a class of fungal metabolites characterized by a highly oxygenated pyrano-quinone bicyclic core and exhibiting a broad range of bioactivities. The first step of the pathway begins with the non-reducing polyketide synthase tazA that assembles one acetyl-CoA starter unit, five malonyl-CoA units, and catalyzes a series of Claisen condensations, methylation, PT-mediated cyclization, and finally releases the first hexaketide precursor through the R-domain. The tazA product then undergoes reduction on its terminal ketone and the following pyran-ring formation by yet undetermined enzyme(s). Dehydration and enoyl reduction, possibly involving the trans-enoyl reductase tazE leads to the next intermediate. TazD is predicted as an acetyltransferase and might catalyze the acetylation steps leading to the synthesis of azaterrilone A. Azaterrilone A is not the final product of the taz pathway and both the highly reducing polyketide synthase tazB and the dual enzyme tazHJ catalyze late steps of the pathway, leading to the production of the 2 final stereoisomers that contain additional polyketide modification whose structures have still to be determined. This is Cytochrome P450 monooxygenase tazI from Aspergillus terreus (strain NIH 2624 / FGSC A1156).